The sequence spans 67 residues: MKTQLAILLITLVLFQMFSQSDAILGEIWKGIKDILGKRGLNDLSDLDELFDGEISKADLDFLREIM.

A signal peptide spans 1–23 (MKTQLAILLITLVLFQMFSQSDA). Leucine 36 is modified (leucine amide). Residues 40 to 67 (GLNDLSDLDELFDGEISKADLDFLREIM) constitute a propeptide that is removed on maturation.

This sequence belongs to the non-disulfide-bridged peptide (NDBP) superfamily. Short antimicrobial peptide (group 4) family. As to expression, expressed by the venom gland.

Its subcellular location is the secreted. It is found in the target cell membrane. Alpha-helical and amphipathic peptide with weak antimicrobial activities against both Gram-positive (MIC=41 uM to &gt;82 uM) and Gram-negative (MIC&gt;82 uM) bacteria. It has extremely weak hemolytic activity against human erythrocytes. In Heterometrus spinifer (Asia giant forest scorpion), this protein is Spiniferin.